We begin with the raw amino-acid sequence, 263 residues long: MAELSTPSPASPAPLDGGRGDELEKFTLRGARQILQLLQDLITHRGLITAHTGGGHSFMTAVLKVDEERGRVVLDPSPDPQANRRALAAPRLTCVTQLDGIRIQFPLVGLGEGQDKGRPALFAPLPAEMLRLQRREFYRLQVPLAHELSCLLKAEDLARKPVEVSARVIDIGAGGVAVVVPTGAAEFVIGGTLPACRLALPDGEPIELDLEVRNLNRQTQRNGTEQLRVGLRFAALPRAADTRIQRYIFKTERALNAKARGGL.

Residues 1–21 (MAELSTPSPASPAPLDGGRGD) form a disordered region. A PilZ domain is found at 133 to 250 (QRREFYRLQV…DTRIQRYIFK (118 aa)).

It belongs to the YcgR family. As to quaternary structure, monomer. Interacts with the flagellar basal bodies.

Its subcellular location is the bacterial flagellum basal body. In terms of biological role, acts as a flagellar brake, regulating swimming and swarming in a bis-(3'-5') cyclic diguanylic acid (c-di-GMP)-dependent manner. Binds 1 c-di-GMP dimer per subunit. Increasing levels of c-di-GMP lead to decreased motility. This chain is Flagellar brake protein YcgR, found in Thauera aminoaromatica.